A 208-amino-acid polypeptide reads, in one-letter code: Urease accessory protein UreG (208 aa).

12–19 contributes to the GTP binding site; the sequence is GPVGAGKT.

It belongs to the SIMIBI class G3E GTPase family. UreG subfamily. As to quaternary structure, homodimer. UreD, UreF and UreG form a complex that acts as a GTP-hydrolysis-dependent molecular chaperone, activating the urease apoprotein by helping to assemble the nickel containing metallocenter of UreC. The UreE protein probably delivers the nickel.

It localises to the cytoplasm. Facilitates the functional incorporation of the urease nickel metallocenter. This process requires GTP hydrolysis, probably effectuated by UreG. The protein is Urease accessory protein UreG of Rhodobacter capsulatus (Rhodopseudomonas capsulata).